The primary structure comprises 567 residues: WD repeat-containing protein 20 (567 aa).

At Ala2 the chain carries N-acetylalanine. 4 WD repeats span residues 147–187 (IDKS…GTTA), 216–257 (VGEG…GTMK), 258–297 (SYFGGLLCLCWSPDGKYIVTGGEDDLVTVWSFLDCRVIAR), and 345–389 (STQS…LFPH). Phosphoserine occurs at positions 355 and 358. Positions 408-441 (PAGSNGSAVTTPGNSVPPPLPRSNSLPHSAVSNA) are disordered. Polar residues-rich tracts occupy residues 411-421 (SNGSAVTTPGN) and 429-441 (RSNSLPHSAVSNA). Phosphoserine occurs at positions 430, 432, and 463. Basic residues predominate over residues 468 to 481 (KERHHEKDRKRNHS). Residues 468-493 (KERHHEKDRKRNHSMGHISSKSSDKL) form a disordered region. Residues 529–566 (IAHERLTVLVFLEDCIVTACQEGFICTWARPGKVSKFQ) form a WD 5 repeat.

As to quaternary structure, interacts with USP12; promotes translocation of USP12/WDR20 to the plasma membrane. Component of the USP12/WDR20/WDR48 deubiquitinating complex. Interacts with USP46; contributes to the cytoplasmic localization of the USP46/WDR20 complex. Component of the USP12/DMWD/WDR48 deubiquitinating complex.

Its subcellular location is the cytoplasm. It is found in the nucleus. In terms of biological role, regulator of deubiquitinating complexes. Activates deubiquitinating activity of complexes containing USP12. Anchors at the base of the ubiquitin-contacting loop of USP12 and remotely modulates the catalytic center of the enzyme. Regulates shuttling of complexes containing USP12 between the plasma membrane, cytoplasm and nucleus. The sequence is that of WD repeat-containing protein 20 (Wdr20) from Mus musculus (Mouse).